Consider the following 203-residue polypeptide: High frequency lysogenization protein HflD homolog (203 aa).

The protein belongs to the HflD family.

The protein resides in the cytoplasm. It is found in the cell inner membrane. This Histophilus somni (strain 2336) (Haemophilus somnus) protein is High frequency lysogenization protein HflD homolog.